The sequence spans 170 residues: Methanogen homoaconitase small subunit (170 aa).

The YLRT signature appears at 26 to 29 (YLRT).

It belongs to the LeuD family. LeuD type 2 subfamily. In terms of assembly, heterotetramer of 2 HacA and 2 HacB proteins.

The catalysed reaction is (2R)-homocitrate = (2R,3S)-homoisocitrate. It catalyses the reaction (2R)-homocitrate = cis-homoaconitate + H2O. The enzyme catalyses (2R,3S)-homoisocitrate = cis-homoaconitate + H2O. It carries out the reaction cis-(homo)2aconitate + H2O = (2R,3S)-iso(homo)2citrate. The catalysed reaction is cis-(homo)3aconitate + H2O = (2R,3S)-iso(homo)3citrate. It participates in organic acid metabolism; 2-oxosuberate biosynthesis. Its function is as follows. Component of a hydro-lyase with broad substrate specificity for cis-unsaturated tricarboxylic acids. Catalyzes both the reversible dehydration of (R)-homocitrate ((R)-2-hydroxybutane-1,2,4-tricarboxylate) to produce cis-homoaconitate ((Z)-but-1-ene-1,2,4-tricarboxylate), and its hydration to homoisocitrate ((1R,2S)-1-hydroxybutane-1,2,4-tricarboxylate). Is also able to hydrate the analogous longer chain substrates cis-homo(2)-aconitate, cis-homo(3)-aconitate. These reactions are part of the biosynthesis pathway of coenzyme B. This Methanothermobacter thermautotrophicus (strain ATCC 29096 / DSM 1053 / JCM 10044 / NBRC 100330 / Delta H) (Methanobacterium thermoautotrophicum) protein is Methanogen homoaconitase small subunit (hacB).